Reading from the N-terminus, the 764-residue chain is Subtilisin-like protease SBT3.1 (764 aa).

The signal sequence occupies residues Met-1–Ser-32. Residues Gly-33–Gln-120 constitute a propeptide, activation peptide. The 76-residue stretch at Val-41–Lys-116 folds into the Inhibitor I9 domain. Residue Asn-76 is glycosylated (N-linked (GlcNAc...) asparagine). The Peptidase S8 domain occupies Thr-124–Thr-610. Catalysis depends on Asp-156, which acts as the Charge relay system. The N-linked (GlcNAc...) asparagine glycan is linked to Asn-216. His-230 serves as the catalytic Charge relay system. Asn-245 and Asn-374 each carry an N-linked (GlcNAc...) asparagine glycan. Ser-541 (charge relay system) is an active-site residue. N-linked (GlcNAc...) asparagine glycosylation is found at Asn-674, Asn-711, and Asn-747.

It belongs to the peptidase S8 family.

It is found in the secreted. The sequence is that of Subtilisin-like protease SBT3.1 from Arabidopsis thaliana (Mouse-ear cress).